Here is an 88-residue protein sequence, read N- to C-terminus: Small ribosomal subunit protein uS15c (88 aa).

Belongs to the universal ribosomal protein uS15 family. As to quaternary structure, part of the 30S ribosomal subunit.

The protein localises to the plastid. The protein resides in the chloroplast. The chain is Small ribosomal subunit protein uS15c (rps15) from Draba nemorosa (Woodland whitlowgrass).